Consider the following 202-residue polypeptide: High mobility group protein B3 (202 aa).

2 DNA-binding regions (HMG box) span residues 9 to 79 (PKGK…KDYG) and 93 to 161 (PKRP…ADYK). A cysteine sulfonic acid (-SO3H); alternate mark is found at cysteine 23 and cysteine 45. Cysteines 23 and 45 form a disulfide. Residues 71-98 (YDREMKDYGPAKGGKKKKDPNAPKRPPS) are disordered. Cysteine 104 bears the Cysteine sulfonic acid (-SO3H) mark. Positions 161–202 (KSKGKFDGAKGAATKAARKKVEEEDEEEEEDEEEEDEDDDDE) are disordered. Over residues 183-202 (EEDEEEEEDEEEEDEDDDDE) the composition is skewed to acidic residues.

It belongs to the HMGB family. Post-translationally, reduction/oxidation of cysteine residues Cys-23, Cys-45 and Cys-104 and a possible intramolecular disulfide bond involving Cys-23 and Cys-45 give rise to different redox forms with specific functional activities in various cellular compartments: 1- fully reduced HMGB3 (HMGB3C23hC45hC104h), 2- disulfide HMGB3 (HMGB3C23-C45C104h) and 3- sulfonyl HMGB3 (HMGB3C23soC45soC104so).

Its subcellular location is the nucleus. It is found in the chromosome. The protein localises to the cytoplasm. Functionally, multifunctional protein with various roles in different cellular compartments. May act in a redox sensitive manner. Associates with chromatin and binds DNA with a preference for non-canonical DNA structures such as single-stranded DNA. Can bend DNA and enhance DNA flexibility by looping thus providing a mechanism to promote activities on various gene promoters. Binds to the delta-1 crystallin/ASL1 enhancer. Proposed to be involved in the innate immune response to nucleic acids by acting as a cytoplasmic promiscuous immunogenic DNA/RNA sensor. This is High mobility group protein B3 (HMGB3) from Gallus gallus (Chicken).